Here is a 414-residue protein sequence, read N- to C-terminus: Histidine--tRNA ligase (414 aa).

The protein belongs to the class-II aminoacyl-tRNA synthetase family. Homodimer.

It is found in the cytoplasm. It carries out the reaction tRNA(His) + L-histidine + ATP = L-histidyl-tRNA(His) + AMP + diphosphate + H(+). In Anaeromyxobacter sp. (strain K), this protein is Histidine--tRNA ligase.